The sequence spans 505 residues: Glycerol kinase 1 (505 aa).

Thr-13 contributes to the ADP binding site. The ATP site is built by Thr-13, Thr-14, and Ser-15. Residue Thr-13 coordinates sn-glycerol 3-phosphate. Residue Arg-17 coordinates ADP. Sn-glycerol 3-phosphate-binding residues include Arg-83, Glu-84, and Tyr-135. Glycerol is bound by residues Arg-83, Glu-84, and Tyr-135. Position 231 is a phosphohistidine; by HPr (His-231). Asp-245 is a sn-glycerol 3-phosphate binding site. Residues Asp-245 and Gln-246 each contribute to the glycerol site. Thr-267 and Gly-310 together coordinate ADP. ATP-binding residues include Thr-267, Gly-310, Gln-314, and Gly-411. ADP contacts are provided by Gly-411 and Asn-415.

It belongs to the FGGY kinase family. In terms of assembly, homotetramer and homodimer (in equilibrium). Post-translationally, the phosphoenolpyruvate-dependent sugar phosphotransferase system (PTS), including enzyme I, and histidine-containing protein (HPr) are required for the phosphorylation, which leads to the activation of the enzyme.

It catalyses the reaction glycerol + ATP = sn-glycerol 3-phosphate + ADP + H(+). Its pathway is polyol metabolism; glycerol degradation via glycerol kinase pathway; sn-glycerol 3-phosphate from glycerol: step 1/1. Its activity is regulated as follows. Activated by phosphorylation and inhibited by fructose 1,6-bisphosphate (FBP). Functionally, key enzyme in the regulation of glycerol uptake and metabolism. Catalyzes the phosphorylation of glycerol to yield sn-glycerol 3-phosphate. This is Glycerol kinase 1 from Lactiplantibacillus plantarum (strain ATCC BAA-793 / NCIMB 8826 / WCFS1) (Lactobacillus plantarum).